The chain runs to 465 residues: Phospholipase A1-II 5 (465 aa).

Ser233 (acyl-ester intermediate) is an active-site residue. Active-site charge relay system residues include Ser233, Asp297, and His336.

Belongs to the AB hydrolase superfamily. Lipase family.

The protein localises to the cytoplasm. Acylhydrolase that catalyzes the hydrolysis of phospholipids at the sn-1 position. The sequence is that of Phospholipase A1-II 5 from Oryza sativa subsp. indica (Rice).